Consider the following 498-residue polypeptide: ADP,ATP carrier protein 1 (498 aa).

The Cytoplasmic portion of the chain corresponds to 1–33; that stretch reads MSTTKSDNYISELRKVIWPIERYENKKFLPMAF. A helical membrane pass occupies residues 34 to 54; sequence MMFCILLNYSTLRSIKDGFVV. Cysteines 37 and 85 form a disulfide. The Extracellular segment spans residues 55-67; it reads TDIGAEAISFLKT. A helical membrane pass occupies residues 68 to 88; sequence YIVLPSAVIAMIVYVKLCDIL. Topologically, residues 89-92 are cytoplasmic; it reads KQEN. Residues 93–113 form a helical membrane-spanning segment; sequence VFYVITSFFLAYFALFAFVLY. The Extracellular segment spans residues 114–147; sequence PNPDLVHPNPEAIESLSLAYPNFKWFIRIVGKWS. The chain crosses the membrane as a helical span at residues 148 to 168; sequence FASFYTMAELWGTLMLSLLFW. At 169–184 the chain is on the cytoplasmic side; the sequence is QFANQITKTDEAKRFY. Residues 185–205 form a helical membrane-spanning segment; the sequence is SMFGLLANLALPVTSLIIGYF. The Extracellular segment spans residues 206–218; the sequence is LHEKTQIVAEHLK. A helical membrane pass occupies residues 219-239; the sequence is FTPLFVIMIISSLAVILTYRW. Residues 240 to 279 lie on the Cytoplasmic side of the membrane; it reads MNKNVLTDPKLYDPALVKGKKAKAKMSLIESFKMIFTSKY. A helical transmembrane segment spans residues 280–300; it reads VGYIALLLIAYGISVNLVEGV. Over 301 to 320 the chain is Extracellular; that stretch reads WKSKLKELHPTKEAYTMYMG. Residues 321-341 traverse the membrane as a helical segment; the sequence is QFQAYQGWVAIAFMIIGSNIL. Residues 342–348 are Cytoplasmic-facing; that stretch reads RKVSWLT. The chain crosses the membrane as a helical span at residues 349-369; that stretch reads AAMITPLMMLITGIAFFAFIF. The Extracellular segment spans residues 370–379; it reads FDSVIAMYLT. Residues 380–400 traverse the membrane as a helical segment; sequence GILASGPLALAVMIGTIQNVL. Residues 401 to 438 are Cytoplasmic-facing; that stretch reads SKGVKYSLFDATKNMAYIPLDKDLRVKGQAAVEVIGGR. An ATP-binding site is contributed by 436 to 442; it reads GGRFGKS. The chain crosses the membrane as a helical span at residues 439–459; that stretch reads FGKSGGAIIQSTFFIIFPALG. Over 460–465 the chain is Extracellular; it reads FVEATP. Residues 466 to 486 traverse the membrane as a helical segment; the sequence is YFASIFFVIVILWIYAVKGLN. Residues 487 to 498 lie on the Cytoplasmic side of the membrane; that stretch reads KEYQVLVNNTEK.

The protein belongs to the ADP/ATP translocase tlc family.

Its subcellular location is the cell membrane. Its function is as follows. Provides the rickettsial cell with host ATP in exchange for rickettsial ADP. This is an obligate exchange system. This energy acquiring activity is an important component of rickettsial parasitism. The polypeptide is ADP,ATP carrier protein 1 (tlcA) (Rickettsia bellii (strain RML369-C)).